The following is a 241-amino-acid chain: Trypsin-1 (241 aa).

Residues 1–13 (MKSLIFVLLLGAV) form the signal peptide. Residues 14-19 (FAEEDK) constitute a propeptide, activation peptide. One can recognise a Peptidase S1 domain in the interval 20-239 (IVGGYECTKH…LSGWVRDTMA (220 aa)). Intrachain disulfides connect Cys26–Cys155, Cys44–Cys60, Cys128–Cys228, Cys135–Cys201, Cys166–Cys180, and Cys191–Cys215. Catalysis depends on charge relay system residues His59 and Asp103. Ser195 functions as the Charge relay system in the catalytic mechanism.

The protein belongs to the peptidase S1 family.

It localises to the secreted. The protein resides in the extracellular space. The enzyme catalyses Preferential cleavage: Arg-|-Xaa, Lys-|-Xaa.. The polypeptide is Trypsin-1 (Gadus morhua (Atlantic cod)).